Consider the following 556-residue polypeptide: Arginine--tRNA ligase (556 aa).

Positions 132-142 (ANPTGDLHLGH) match the 'HIGH' region motif.

This sequence belongs to the class-I aminoacyl-tRNA synthetase family. In terms of assembly, monomer.

It localises to the cytoplasm. It carries out the reaction tRNA(Arg) + L-arginine + ATP = L-arginyl-tRNA(Arg) + AMP + diphosphate. The protein is Arginine--tRNA ligase of Bacillus velezensis (strain DSM 23117 / BGSC 10A6 / LMG 26770 / FZB42) (Bacillus amyloliquefaciens subsp. plantarum).